A 56-amino-acid polypeptide reads, in one-letter code: Sperm protamine P1 (56 aa).

Residues 1–56 (RLSRRRVYSIGGRRRRRRRRSRGRRGRRRGRRRGRRRGRRRGRRRRRRRGGRRRRR) are disordered.

In terms of processing, P2 is phosphorylated in immature sperm. It is dephosphorylated in mature sperm allowing a stronger interaction with DNA. As to expression, testis.

Its subcellular location is the nucleus. The protein resides in the chromosome. Protamines substitute for histones in the chromatin of sperm during the haploid phase of spermatogenesis. They compact sperm DNA into a highly condensed, stable and inactive complex. Functionally, octopus spermiogenesis is characterized by a double nuclear protein transition: Histones are first replaced by P1, which allows the chromatin to adopt a shape that is not as relaxed as with histones. The majority of P1 is later replaced by P2, forming a compact chromatin. P2 is the main protamine of sperm. The sequence is that of Sperm protamine P1 from Octopus vulgaris (Common octopus).